The following is a 466-amino-acid chain: 55 kDa erythrocyte membrane protein (466 aa).

N-acetylthreonine is present on Thr2. A phosphoserine mark is found at Ser13 and Ser19. Residue Thr49 is modified to Phosphothreonine. Ser52, Ser57, and Ser110 each carry phosphoserine. The 82-residue stretch at 71 to 152 (LIQIEKVTEE…MISLKVIPNQ (82 aa)) folds into the PDZ domain. One can recognise an SH3 domain in the interval 158 to 228 (ALQMFMRAQF…PSPELQEWRV (71 aa)). A Phosphoserine modification is found at Ser243. The interaction with PALS1 stretch occupies residues 268 to 466 (VVSYEEVVRL…PQWVPVSWVY (199 aa)). The Guanylate kinase-like domain maps to 282 to 451 (RKTLVLIGAS…TLKKLQEAFD (170 aa)).

Belongs to the MAGUK family. As to quaternary structure, heterodimer with PALS1. Interacts with DLG5 and NF2. Interacts (via guanylate kinase-like domain) with WHRN (via third PDZ domain). In terms of processing, palmitoylated.

It is found in the cell membrane. The protein resides in the cell projection. It localises to the stereocilium. Its function is as follows. Essential regulator of neutrophil polarity. Regulates neutrophil polarization by regulating AKT1 phosphorylation through a mechanism that is independent of PIK3CG activity. The polypeptide is 55 kDa erythrocyte membrane protein (MPP1) (Papio anubis (Olive baboon)).